Reading from the N-terminus, the 1173-residue chain is Pumilio homolog 2 (1173 aa).

Disordered regions lie at residues 41–68 (VSSA…PLSG), 265–296 (VSKL…ASPT), 480–518 (QQAA…ESLA), 592–662 (LTGA…SLGF), and 730–759 (PISM…SSSL). Over residues 287–296 (TPGSRQASPT) the composition is skewed to polar residues. The span at 480–492 (QQAATQASQGQQQ) shows a compositional bias: low complexity. Residues 493 to 518 (VMRATSNQRPLTPNQAQQGQQPESLA) are compositionally biased toward polar residues. A compositionally biased stretch (low complexity) spans 606-622 (QQQQQQQQQQHQQQQQQ). A compositionally biased stretch (polar residues) spans 623–633 (PNANLHSNSFY). Over residues 634–657 (GNSTMSNNSQSSSLFSPGPGQPGS) the composition is skewed to low complexity. Positions 815–1155 (GRSRLLEDFR…HILAKLEKYY (341 aa)) constitute a PUM-HD domain. 9 Pumilio repeats span residues 835-870 (DLMG…LVFS), 871-906 (EILQ…ALAT), 907-942 (RIRG…EMVR), 943-978 (ELDG…FIIE), 979-1014 (AFKG…PILE), 1015-1050 (ELHQ…KIVC), 1051-1086 (EVRG…FLID), 1087-1129 (EICC…IIMH), and 1130-1167 (KIRP…LLVG). The tract at residues 850 to 854 (SRFIQ) is adenine-nucleotide binding in RNA target. A uracil-nucleotide binding in RNA target region spans residues 886 to 890 (NYVIQ). An adenine-nucleotide binding in RNA target region spans residues 922–926 (CRVIQ). Residues 958-962 (NHVVQ) are non-specific-nucleotide binding in RNA target. Positions 994–998 (CRVIQ) are adenine-nucleotide binding in RNA target. The segment at 1030–1034 (NYVIQ) is uracil-nucleotide binding in RNA target. The tract at residues 1066-1070 (SNVVE) is guanine-nucleotide binding in RNA target. The segment at 1109–1113 (NYVVQ) is uracil-nucleotide binding in RNA target.

In terms of assembly, component of a complex with papd4, sympk, tacc3, parn, dazl and cpeb1. Phosphorylated.

The protein localises to the cytoplasm. It is found in the P-body. Its subcellular location is the cytoplasmic granule. In terms of biological role, sequence-specific RNA-binding protein that acts as a post-transcriptional repressor by binding the 3'-UTR of mRNA targets. Binds to an RNA consensus sequence, the Pumilio Response Element (PRE), 5'-UGUANAUA-3', that is related to the Nanos Response Element (NRE). Mediates post-transcriptional repression of transcripts via different mechanisms: acts via direct recruitment of deadenylase complexes leading to translational inhibition and mRNA degradation. Also mediates deadenylation-independent repression by promoting accessibility of miRNAs. In Xenopus laevis (African clawed frog), this protein is Pumilio homolog 2 (pum2).